An 89-amino-acid chain; its full sequence is MKVTPLGERLLIKPLKEEKKTEGGIVLPDSAKEKPMKAEVVAVGEKVENIDVKVGDRVIFSKYAGTEIKIDDVDYIIIDANDILAKIEE.

The protein belongs to the GroES chaperonin family. In terms of assembly, heptamer of 7 subunits arranged in a ring. Interacts with the chaperonin GroEL.

The protein resides in the cytoplasm. Its function is as follows. Together with the chaperonin GroEL, plays an essential role in assisting protein folding. The GroEL-GroES system forms a nano-cage that allows encapsulation of the non-native substrate proteins and provides a physical environment optimized to promote and accelerate protein folding. GroES binds to the apical surface of the GroEL ring, thereby capping the opening of the GroEL channel. This is Co-chaperonin GroES from Pseudothermotoga lettingae (strain ATCC BAA-301 / DSM 14385 / NBRC 107922 / TMO) (Thermotoga lettingae).